The following is a 285-amino-acid chain: Polyamine aminopropyltransferase (285 aa).

A PABS domain is found at 2 to 237 (EFWFSELHSP…GYWLFGFASK (236 aa)). Gln31 contacts S-methyl-5'-thioadenosine. Asp86 provides a ligand contact to spermidine. Residues Glu106 and 137–138 (DA) contribute to the S-methyl-5'-thioadenosine site. Residue Asp155 is the Proton acceptor of the active site.

It belongs to the spermidine/spermine synthase family. Homodimer or homotetramer.

The protein localises to the cytoplasm. It carries out the reaction S-adenosyl 3-(methylsulfanyl)propylamine + putrescine = S-methyl-5'-thioadenosine + spermidine + H(+). It functions in the pathway amine and polyamine biosynthesis; spermidine biosynthesis; spermidine from putrescine: step 1/1. Its function is as follows. Catalyzes the irreversible transfer of a propylamine group from the amino donor S-adenosylmethioninamine (decarboxy-AdoMet) to putrescine (1,4-diaminobutane) to yield spermidine. This is Polyamine aminopropyltransferase from Lachnospira eligens (strain ATCC 27750 / DSM 3376 / VPI C15-48 / C15-B4) (Eubacterium eligens).